The following is a 362-amino-acid chain: MTVNLLNFNQAALAEYFQGIGEKPFRAKQMMRWMHHFGVSDFGEMTDIAKALREKLAKEAVVAPPSVHLEQISEDGTRKWLIDVGAGNGVETVFIPEDDRGTLCVSSQVGCALDCTFCSTGRQGFNRNLSVSEIIGQLWVANKALGRDPKGDRIISNVVMMGMGEPLANFDNVVAAMNIMLDDSAYGLSRRRVTLSTSGMVPAMDRLREECPVALAVSLHAPNDALRDEIVPINRKYPIAQLMAACQRYLEKAPRDFVTFEYVMLDGVNDTAEHARQLLNIVQDVPCKFNLIPFNPFPNSGYDTSKPDNIRRFRDILMQAGYVVTTRKTRGEDIDAACGQLAGKVQDKTKRSLRRIKVEAVA.

The Proton acceptor role is filled by Glu91. In terms of domain architecture, Radical SAM core spans 97 to 333; sequence EDDRGTLCVS…VTTRKTRGED (237 aa). A disulfide bridge connects residues Cys104 and Cys338. 3 residues coordinate [4Fe-4S] cluster: Cys111, Cys115, and Cys118. S-adenosyl-L-methionine is bound by residues 164–165, Ser196, 218–220, and Asn295; these read GE and SLH. Residue Cys338 is the S-methylcysteine intermediate of the active site.

The protein belongs to the radical SAM superfamily. RlmN family. Requires [4Fe-4S] cluster as cofactor.

It is found in the cytoplasm. The enzyme catalyses adenosine(2503) in 23S rRNA + 2 reduced [2Fe-2S]-[ferredoxin] + 2 S-adenosyl-L-methionine = 2-methyladenosine(2503) in 23S rRNA + 5'-deoxyadenosine + L-methionine + 2 oxidized [2Fe-2S]-[ferredoxin] + S-adenosyl-L-homocysteine. The catalysed reaction is adenosine(37) in tRNA + 2 reduced [2Fe-2S]-[ferredoxin] + 2 S-adenosyl-L-methionine = 2-methyladenosine(37) in tRNA + 5'-deoxyadenosine + L-methionine + 2 oxidized [2Fe-2S]-[ferredoxin] + S-adenosyl-L-homocysteine. In terms of biological role, specifically methylates position 2 of adenine 2503 in 23S rRNA and position 2 of adenine 37 in tRNAs. m2A2503 modification seems to play a crucial role in the proofreading step occurring at the peptidyl transferase center and thus would serve to optimize ribosomal fidelity. The chain is Dual-specificity RNA methyltransferase RlmN from Methylobacillus flagellatus (strain ATCC 51484 / DSM 6875 / VKM B-1610 / KT).